Reading from the N-terminus, the 316-residue chain is Endochitinase 2 (316 aa).

An N-terminal signal peptide occupies residues 1–18 (EFTTLFLLFSVLLLSASA). The Chitin-binding type-1 domain maps to 19–60 (EQCGSQAGGALCASGLCCSKFGWCGNTNDYCGPGNCQSQCPG). 7 disulfide bridges follow: Cys-21–Cys-36, Cys-30–Cys-42, Cys-35–Cys-49, Cys-54–Cys-58, Cys-87–Cys-150, Cys-162–Cys-170, and Cys-269–Cys-301. Catalysis depends on Glu-132, which acts as the Proton donor. Residues 310-316 (GLLVDTV) constitute a propeptide, removed in mature form, vacuolar targeting.

This sequence belongs to the glycosyl hydrolase 19 family. Chitinase class I subfamily.

The protein resides in the vacuole. The catalysed reaction is Random endo-hydrolysis of N-acetyl-beta-D-glucosaminide (1-&gt;4)-beta-linkages in chitin and chitodextrins.. Functionally, defense against chitin-containing fungal pathogens. This chain is Endochitinase 2 (CHTB2), found in Solanum tuberosum (Potato).